The following is a 64-amino-acid chain: Alpha-conotoxin-like Lp1.7 (64 aa).

An N-terminal signal peptide occupies residues M1–S21. The propeptide occupies F22–R41. 2 cysteine pairs are disulfide-bonded: C47–C53 and C48–C61. Residues D49–P51 are lacks the Ser-Xaa-Pro motif that is crucial for potent interaction with nAChR.

Belongs to the conotoxin A superfamily. Expressed by the venom duct.

The protein localises to the secreted. In terms of biological role, alpha-conotoxins act on postsynaptic membranes, they bind to the nicotinic acetylcholine receptors (nAChR) and thus inhibit them. Has possibly a distinct nAChR binding mode from other alpha-conotoxins, due to a different three residue motif (lacks the Ser-Xaa-Pro motif). The chain is Alpha-conotoxin-like Lp1.7 from Conus leopardus (Leopard cone).